The following is a 283-amino-acid chain: Phosphatidylglycerol--prolipoprotein diacylglyceryl transferase (283 aa).

The next 7 helical transmembrane spans lie at 21–41, 60–80, 95–115, 124–144, 176–196, 203–223, and 239–259; these read LAVRWYGLMYLFGFMFALWLA, LLFAGFLGVVIGGRVGYVLFY, VWTGGMSFHGGLLGVISAMLW, FFTIADFVAPLVPFGLGAGRL, SQLYEFALEGVVLFFILNWFI, GAVSGLFLFGYGTFRFLVEYV, and MGQILSLPMVIGGLLMMLWAF. Arg143 is a binding site for a 1,2-diacyl-sn-glycero-3-phospho-(1'-sn-glycerol).

Belongs to the Lgt family.

The protein resides in the cell inner membrane. The enzyme catalyses L-cysteinyl-[prolipoprotein] + a 1,2-diacyl-sn-glycero-3-phospho-(1'-sn-glycerol) = an S-1,2-diacyl-sn-glyceryl-L-cysteinyl-[prolipoprotein] + sn-glycerol 1-phosphate + H(+). It participates in protein modification; lipoprotein biosynthesis (diacylglyceryl transfer). Its function is as follows. Catalyzes the transfer of the diacylglyceryl group from phosphatidylglycerol to the sulfhydryl group of the N-terminal cysteine of a prolipoprotein, the first step in the formation of mature lipoproteins. This is Phosphatidylglycerol--prolipoprotein diacylglyceryl transferase from Aliivibrio fischeri (strain MJ11) (Vibrio fischeri).